The sequence spans 364 residues: Fructose-1,6-bisphosphatase class 1 2 (364 aa).

The Mg(2+) site is built by Glu99, Asp121, Leu123, and Asp124. Residues 124 to 127 and Asn220 each bind substrate; that span reads DGSS. Glu292 is a Mg(2+) binding site.

This sequence belongs to the FBPase class 1 family. Homotetramer. It depends on Mg(2+) as a cofactor.

It localises to the cytoplasm. The catalysed reaction is beta-D-fructose 1,6-bisphosphate + H2O = beta-D-fructose 6-phosphate + phosphate. It functions in the pathway carbohydrate biosynthesis; gluconeogenesis. The protein is Fructose-1,6-bisphosphatase class 1 2 of Polaromonas naphthalenivorans (strain CJ2).